The following is a 184-amino-acid chain: MGLWDSLLNWLRSLFFKQEMELSLVGLQNAGKTSLVNAIATGGYSEDMIPTVGFNMRKVTKGNVTIKIWDLGGQRRFRTMWERYCRGVSAIVYVIDAADRDSVPISRSELNDLLTKPSLNGIPLLILGNKIDKSEALSKQALVDQLGLESVTDREVCCYMISCKDSINIDAVIDWLIKHSRTAT.

Residues methionine 1–glutamine 18 constitute an intramembrane region (note=Mediates targeting to membranes). Residues asparagine 29–serine 34, methionine 48–threonine 51, aspartate 70–glutamine 74, and asparagine 129–aspartate 132 each bind GTP.

This sequence belongs to the small GTPase superfamily. Arf family. As to quaternary structure, interacts with tubulin.

It localises to the late endosome membrane. The protein resides in the lysosome membrane. The protein localises to the cytoplasm. Its subcellular location is the cytoskeleton. It is found in the spindle. Functionally, may play a role in lysosome motility. May play a role in chromosome segregation. (Microbial infection) Component of tomato mosaic virus (ToMV) RNA replication complexes. Required for tobamovirus multiplication, especially for efficient negative-strand RNA synthesis and viral RNA capping. The polypeptide is ADP-ribosylation factor-like protein 8c (Arabidopsis thaliana (Mouse-ear cress)).